Reading from the N-terminus, the 404-residue chain is Multidrug resistance protein MdtG (404 aa).

11 helical membrane passes run 19-39 (LGCF…PLYV), 56-76 (LVFS…GGLA), 90-110 (LGMA…QFLI), 113-133 (ALLG…ATQV), 144-164 (TLST…GLLA), 171-191 (PVFF…FFFI), 222-242 (LFVT…ILTL), 254-274 (IAFI…LSAP), 288-308 (ILIV…FVQT), 317-337 (FLLG…LVYN), and 376-396 (AVFC…WNSL).

The protein belongs to the major facilitator superfamily. DHA1 family. MdtG (TC 2.A.1.2.20) subfamily.

The protein localises to the cell inner membrane. This Salmonella arizonae (strain ATCC BAA-731 / CDC346-86 / RSK2980) protein is Multidrug resistance protein MdtG.